The sequence spans 430 residues: Trigger factor (430 aa).

The PPIase FKBP-type domain occupies 157 to 242 (GDLVALETWS…AVEVSEPVLP (86 aa)).

This sequence belongs to the FKBP-type PPIase family. Tig subfamily.

The protein resides in the cytoplasm. It carries out the reaction [protein]-peptidylproline (omega=180) = [protein]-peptidylproline (omega=0). Its function is as follows. Involved in protein export. Acts as a chaperone by maintaining the newly synthesized protein in an open conformation. Functions as a peptidyl-prolyl cis-trans isomerase. The polypeptide is Trigger factor (Xanthomonas oryzae pv. oryzae (strain MAFF 311018)).